Here is a 115-residue protein sequence, read N- to C-terminus: ATP synthase subunit g, mitochondrial (115 aa).

M1 bears the N-acetylmethionine mark. S3 and S62 each carry phosphoserine.

It belongs to the ATPase g subunit family. F-type ATPases have 2 components, CF(1) - the catalytic core - and CF(0) - the membrane proton channel. In yeast, the dimeric form of ATP synthase consists of 17 polypeptides: alpha, beta, gamma, delta, epsilon, 4 (B), 5 (OSCP), 6 (A), 8, 9 (C), d, E (Tim11), f, g, h, i/j and k. In terms of processing, phosphorylation on Ser-62 impairs ATP synthase dimerization.

It is found in the mitochondrion membrane. Functionally, mitochondrial membrane ATP synthase (F(1)F(0) ATP synthase or Complex V) produces ATP from ADP in the presence of a proton gradient across the membrane which is generated by electron transport complexes of the respiratory chain. F-type ATPases consist of two structural domains, F(1) - containing the extramembraneous catalytic core, and F(0) - containing the membrane proton channel, linked together by a central stalk and a peripheral stalk. During catalysis, ATP synthesis in the catalytic domain of F(1) is coupled via a rotary mechanism of the central stalk subunits to proton translocation. Part of the complex F(0) domain. Minor subunit located with subunit a in the membrane. This chain is ATP synthase subunit g, mitochondrial (ATP20), found in Saccharomyces cerevisiae (strain ATCC 204508 / S288c) (Baker's yeast).